The sequence spans 470 residues: Tryptophan synthase beta chain 1, chloroplastic (470 aa).

Over residues 1-10 the composition is skewed to polar residues; that stretch reads MAASGTSATF. Residues 1–24 are disordered; sequence MAASGTSATFRASVSSAPSSSSQL. Residues 12–22 show a composition bias toward low complexity; sequence ASVSSAPSSSS. Residue lysine 165 is modified to N6-(pyridoxal phosphate)lysine.

The protein belongs to the TrpB family. As to quaternary structure, tetramer of two alpha and two beta chains. Pyridoxal 5'-phosphate is required as a cofactor.

The protein resides in the plastid. The protein localises to the chloroplast. It carries out the reaction (1S,2R)-1-C-(indol-3-yl)glycerol 3-phosphate + L-serine = D-glyceraldehyde 3-phosphate + L-tryptophan + H2O. The protein operates within amino-acid biosynthesis; L-tryptophan biosynthesis; L-tryptophan from chorismate: step 5/5. Its function is as follows. The beta subunit is responsible for the synthesis of L-tryptophan from indole and L-serine. This is Tryptophan synthase beta chain 1, chloroplastic (TSB1) from Arabidopsis thaliana (Mouse-ear cress).